The sequence spans 118 residues: Ribosome-binding factor A (118 aa).

It belongs to the RbfA family. Monomer. Binds 30S ribosomal subunits, but not 50S ribosomal subunits or 70S ribosomes.

It localises to the cytoplasm. Functionally, one of several proteins that assist in the late maturation steps of the functional core of the 30S ribosomal subunit. Associates with free 30S ribosomal subunits (but not with 30S subunits that are part of 70S ribosomes or polysomes). Required for efficient processing of 16S rRNA. May interact with the 5'-terminal helix region of 16S rRNA. The polypeptide is Ribosome-binding factor A (Bacillus thuringiensis (strain Al Hakam)).